The primary structure comprises 193 residues: Imidazoleglycerol-phosphate dehydratase (193 aa).

This sequence belongs to the imidazoleglycerol-phosphate dehydratase family.

It localises to the cytoplasm. The enzyme catalyses D-erythro-1-(imidazol-4-yl)glycerol 3-phosphate = 3-(imidazol-4-yl)-2-oxopropyl phosphate + H2O. The protein operates within amino-acid biosynthesis; L-histidine biosynthesis; L-histidine from 5-phospho-alpha-D-ribose 1-diphosphate: step 6/9. In Metallosphaera sedula (strain ATCC 51363 / DSM 5348 / JCM 9185 / NBRC 15509 / TH2), this protein is Imidazoleglycerol-phosphate dehydratase.